The following is a 319-amino-acid chain: Acetyl-coenzyme A carboxylase carboxyl transferase subunit alpha (319 aa).

The region spanning 35–296 (DLDKEIEQLE…KANLLRQLED (262 aa)) is the CoA carboxyltransferase C-terminal domain.

Belongs to the AccA family. In terms of assembly, acetyl-CoA carboxylase is a heterohexamer composed of biotin carboxyl carrier protein (AccB), biotin carboxylase (AccC) and two subunits each of ACCase subunit alpha (AccA) and ACCase subunit beta (AccD).

The protein localises to the cytoplasm. The catalysed reaction is N(6)-carboxybiotinyl-L-lysyl-[protein] + acetyl-CoA = N(6)-biotinyl-L-lysyl-[protein] + malonyl-CoA. It participates in lipid metabolism; malonyl-CoA biosynthesis; malonyl-CoA from acetyl-CoA: step 1/1. Its function is as follows. Component of the acetyl coenzyme A carboxylase (ACC) complex. First, biotin carboxylase catalyzes the carboxylation of biotin on its carrier protein (BCCP) and then the CO(2) group is transferred by the carboxyltransferase to acetyl-CoA to form malonyl-CoA. In Vibrio campbellii (strain ATCC BAA-1116), this protein is Acetyl-coenzyme A carboxylase carboxyl transferase subunit alpha.